A 196-amino-acid chain; its full sequence is Large ribosomal subunit protein bL25 (196 aa).

It belongs to the bacterial ribosomal protein bL25 family. CTC subfamily. Part of the 50S ribosomal subunit; part of the 5S rRNA/L5/L18/L25 subcomplex. Contacts the 5S rRNA. Binds to the 5S rRNA independently of L5 and L18.

Its function is as follows. This is one of the proteins that binds to the 5S RNA in the ribosome where it forms part of the central protuberance. This Bacteroides fragilis (strain ATCC 25285 / DSM 2151 / CCUG 4856 / JCM 11019 / LMG 10263 / NCTC 9343 / Onslow / VPI 2553 / EN-2) protein is Large ribosomal subunit protein bL25.